Consider the following 99-residue polypeptide: DNA-binding protein HU (99 aa).

The disordered stretch occupies residues 67 to 86 (REGRNPKTGAKMKIDAYNQP).

The protein belongs to the bacterial histone-like protein family. In terms of assembly, homodimer.

Functionally, histone-like DNA-binding protein which is capable of wrapping DNA to stabilize it, and thus to prevent its denaturation under extreme environmental conditions. This chain is DNA-binding protein HU (hup), found in Rickettsia conorii (strain ATCC VR-613 / Malish 7).